We begin with the raw amino-acid sequence, 313 residues long: Porphobilinogen deaminase (313 aa).

S-(dipyrrolylmethanemethyl)cysteine is present on cysteine 242.

The protein belongs to the HMBS family. As to quaternary structure, monomer. Dipyrromethane serves as cofactor.

It catalyses the reaction 4 porphobilinogen + H2O = hydroxymethylbilane + 4 NH4(+). Its pathway is porphyrin-containing compound metabolism; protoporphyrin-IX biosynthesis; coproporphyrinogen-III from 5-aminolevulinate: step 2/4. In terms of biological role, tetrapolymerization of the monopyrrole PBG into the hydroxymethylbilane pre-uroporphyrinogen in several discrete steps. The sequence is that of Porphobilinogen deaminase from Pseudomonas putida (strain ATCC 47054 / DSM 6125 / CFBP 8728 / NCIMB 11950 / KT2440).